Consider the following 203-residue polypeptide: Putative phosphoserine phosphatase 2 (203 aa).

H9 serves as the catalytic Tele-phosphohistidine intermediate. The active site involves H149.

The protein belongs to the histidine phosphatase superfamily. Metal-independent phosphoserine phosphatase family. Heterodimer with PspA. The PspB subunit appears to have no or considerably lower PSP activity compared with that of PspA.

The catalysed reaction is O-phospho-L-serine + H2O = L-serine + phosphate. It catalyses the reaction O-phospho-D-serine + H2O = D-serine + phosphate. It participates in amino-acid biosynthesis; L-serine biosynthesis; L-serine from 3-phospho-D-glycerate: step 3/3. Activity is not inhibited by EDTA in vitro, nor enhanced by the addition of Mg(2+). Part of a complex that catalyzes the dephosphorylation of L-phosphoserine to serine and inorganic phosphate. Is poorly or not active toward D-phosphoserine, DL-phosphothreonine, 3-phosphoglycerate, para-nitrophenylphosphate, and fructose-6-phosphate. Does not display phosphoglycerate mutase activity. The sequence is that of Putative phosphoserine phosphatase 2 (pspB) from Hydrogenobacter thermophilus (strain DSM 6534 / IAM 12695 / TK-6).